The following is a 372-amino-acid chain: Queuine tRNA-ribosyltransferase (372 aa).

Catalysis depends on Asp-92, which acts as the Proton acceptor. Residues 92–96, Asp-146, Gln-188, and Gly-215 each bind substrate; that span reads DSGGY. Residues 246–252 are RNA binding; that stretch reads GIGSLRE. Asp-265 acts as the Nucleophile in catalysis. An RNA binding; important for wobble base 34 recognition region spans residues 270 to 274; it reads TRLGR. 4 residues coordinate Zn(2+): Cys-303, Cys-305, Cys-308, and His-334.

The protein belongs to the queuine tRNA-ribosyltransferase family. As to quaternary structure, homodimer. Within each dimer, one monomer is responsible for RNA recognition and catalysis, while the other monomer binds to the replacement base PreQ1. It depends on Zn(2+) as a cofactor.

The enzyme catalyses 7-aminomethyl-7-carbaguanine + guanosine(34) in tRNA = 7-aminomethyl-7-carbaguanosine(34) in tRNA + guanine. It functions in the pathway tRNA modification; tRNA-queuosine biosynthesis. Catalyzes the base-exchange of a guanine (G) residue with the queuine precursor 7-aminomethyl-7-deazaguanine (PreQ1) at position 34 (anticodon wobble position) in tRNAs with GU(N) anticodons (tRNA-Asp, -Asn, -His and -Tyr). Catalysis occurs through a double-displacement mechanism. The nucleophile active site attacks the C1' of nucleotide 34 to detach the guanine base from the RNA, forming a covalent enzyme-RNA intermediate. The proton acceptor active site deprotonates the incoming PreQ1, allowing a nucleophilic attack on the C1' of the ribose to form the product. After dissociation, two additional enzymatic reactions on the tRNA convert PreQ1 to queuine (Q), resulting in the hypermodified nucleoside queuosine (7-(((4,5-cis-dihydroxy-2-cyclopenten-1-yl)amino)methyl)-7-deazaguanosine). The protein is Queuine tRNA-ribosyltransferase of Prochlorococcus marinus subsp. pastoris (strain CCMP1986 / NIES-2087 / MED4).